The primary structure comprises 536 residues: CTP synthase (536 aa).

Positions 1 to 267 are amidoligase domain; it reads MSKFVFVTGG…CKQTLNCLEL (267 aa). Serine 13 is a binding site for CTP. Serine 13 contacts UTP. ATP contacts are provided by residues 14-19 and aspartate 71; that span reads SIGKGI. Residues aspartate 71 and glutamate 141 each contribute to the Mg(2+) site. Residues 148 to 150, 188 to 193, and lysine 224 each bind CTP; these read DIE and KTKPTQ. Residues 188-193 and lysine 224 each bind UTP; that span reads KTKPTQ. The region spanning 292–534 is the Glutamine amidotransferase type-1 domain; that stretch reads KVALVGKYIE…IKASQEKLEQ (243 aa). Residue glycine 354 coordinates L-glutamine. Cysteine 381 acts as the Nucleophile; for glutamine hydrolysis in catalysis. L-glutamine contacts are provided by residues 382–385, glutamate 405, and arginine 462; that span reads LGMQ. Catalysis depends on residues histidine 507 and glutamate 509.

This sequence belongs to the CTP synthase family. In terms of assembly, homotetramer.

It carries out the reaction UTP + L-glutamine + ATP + H2O = CTP + L-glutamate + ADP + phosphate + 2 H(+). It catalyses the reaction L-glutamine + H2O = L-glutamate + NH4(+). The enzyme catalyses UTP + NH4(+) + ATP = CTP + ADP + phosphate + 2 H(+). It participates in pyrimidine metabolism; CTP biosynthesis via de novo pathway; CTP from UDP: step 2/2. Its activity is regulated as follows. Allosterically activated by GTP, when glutamine is the substrate; GTP has no effect on the reaction when ammonia is the substrate. The allosteric effector GTP functions by stabilizing the protein conformation that binds the tetrahedral intermediate(s) formed during glutamine hydrolysis. Inhibited by the product CTP, via allosteric rather than competitive inhibition. Functionally, catalyzes the ATP-dependent amination of UTP to CTP with either L-glutamine or ammonia as the source of nitrogen. Regulates intracellular CTP levels through interactions with the four ribonucleotide triphosphates. This Prochlorococcus marinus subsp. pastoris (strain CCMP1986 / NIES-2087 / MED4) protein is CTP synthase.